We begin with the raw amino-acid sequence, 157 residues long: UPF0262 protein RHE_CH00582 (157 aa).

It belongs to the UPF0262 family.

In Rhizobium etli (strain ATCC 51251 / DSM 11541 / JCM 21823 / NBRC 15573 / CFN 42), this protein is UPF0262 protein RHE_CH00582.